A 218-amino-acid chain; its full sequence is Capsid protein (218 aa).

Met1 is subject to N-acetylmethionine; by host. Low complexity predominate over residues 1–10 (MDKSESTSAG). Residues 1–30 (MDKSESTSAGRNRRRRPRRGSRSASSSADA) form a disordered region. Over residues 11-21 (RNRRRRPRRGS) the composition is skewed to basic residues.

It belongs to the cucumovirus capsid protein family.

It is found in the virion. Capsid protein. Probably binds RNA and plays a role in packaging. The sequence is that of Capsid protein from Cucumis sativus (Cucumber).